We begin with the raw amino-acid sequence, 139 residues long: S-adenosylmethionine decarboxylase proenzyme (139 aa).

Catalysis depends on serine 63, which acts as the Schiff-base intermediate with substrate; via pyruvic acid. A Pyruvic acid (Ser); by autocatalysis modification is found at serine 63. Histidine 68 acts as the Proton acceptor; for processing activity in catalysis. Residue cysteine 83 is the Proton donor; for catalytic activity of the active site.

The protein belongs to the prokaryotic AdoMetDC family. Type 1 subfamily. In terms of assembly, heterotetramer of two alpha and two beta chains arranged as a dimer of alpha/beta heterodimers. It depends on pyruvate as a cofactor. In terms of processing, is synthesized initially as an inactive proenzyme. Formation of the active enzyme involves a self-maturation process in which the active site pyruvoyl group is generated from an internal serine residue via an autocatalytic post-translational modification. Two non-identical subunits are generated from the proenzyme in this reaction, and the pyruvate is formed at the N-terminus of the alpha chain, which is derived from the carboxyl end of the proenzyme. The post-translation cleavage follows an unusual pathway, termed non-hydrolytic serinolysis, in which the side chain hydroxyl group of the serine supplies its oxygen atom to form the C-terminus of the beta chain, while the remainder of the serine residue undergoes an oxidative deamination to produce ammonia and the pyruvoyl group blocking the N-terminus of the alpha chain.

The enzyme catalyses S-adenosyl-L-methionine + H(+) = S-adenosyl 3-(methylsulfanyl)propylamine + CO2. It participates in amine and polyamine biosynthesis; S-adenosylmethioninamine biosynthesis; S-adenosylmethioninamine from S-adenosyl-L-methionine: step 1/1. Functionally, catalyzes the decarboxylation of S-adenosylmethionine to S-adenosylmethioninamine (dcAdoMet), the propylamine donor required for the synthesis of the polyamines spermine and spermidine from the diamine putrescine. In Pyrococcus abyssi (strain GE5 / Orsay), this protein is S-adenosylmethionine decarboxylase proenzyme.